A 513-amino-acid polypeptide reads, in one-letter code: Xylose import ATP-binding protein XylG (513 aa).

2 ABC transporter domains span residues 5–242 and 259–505; these read LEMK…VGRE and LRIE…LRSE. Position 37–44 (37–44) interacts with ATP; it reads GENGSGKS.

This sequence belongs to the ABC transporter superfamily. Xylose importer (TC 3.A.1.2.4) family. The complex is composed of two ATP-binding proteins (XylG), two transmembrane proteins (XylH) and a solute-binding protein (XylF).

The protein localises to the cell inner membrane. It catalyses the reaction D-xylose(out) + ATP + H2O = D-xylose(in) + ADP + phosphate + H(+). Part of the ABC transporter complex XylFGH involved in xylose import. Responsible for energy coupling to the transport system. The sequence is that of Xylose import ATP-binding protein XylG from Shigella flexneri serotype 5b (strain 8401).